A 105-amino-acid chain; its full sequence is MKNKIKIRLKSFDHRSLDQATKEIVSAVKRTFATINGPIPLPRKIERFTVNRSPHVHKKSREQFEIRKHKRLLVIDDPNPAVVDALSKVDLAAGVDVVIELENGE.

This sequence belongs to the universal ribosomal protein uS10 family. In terms of assembly, part of the 30S ribosomal subunit.

Its function is as follows. Involved in the binding of tRNA to the ribosomes. This Rickettsia typhi (strain ATCC VR-144 / Wilmington) protein is Small ribosomal subunit protein uS10.